The sequence spans 711 residues: Polyribonucleotide nucleotidyltransferase (711 aa).

D486 and D492 together coordinate Mg(2+). The 60-residue stretch at 553 to 612 (PRIHTIKINPDKIKDVIGKGGSVIRALTEETGTTIEIEDDGTVKIAATDGEKAKHAIRRI) folds into the KH domain. Residues 622–690 (GRVYTGKVTR…RQGRIRLSIK (69 aa)) form the S1 motif domain. The tract at residues 689-711 (IKEATEQSQPAAAPEAPAAEQGE) is disordered. Over residues 694–711 (EQSQPAAAPEAPAAEQGE) the composition is skewed to low complexity.

This sequence belongs to the polyribonucleotide nucleotidyltransferase family. Component of the RNA degradosome, which is a multiprotein complex involved in RNA processing and mRNA degradation. Mg(2+) is required as a cofactor.

Its subcellular location is the cytoplasm. The catalysed reaction is RNA(n+1) + phosphate = RNA(n) + a ribonucleoside 5'-diphosphate. Involved in mRNA degradation. Catalyzes the phosphorolysis of single-stranded polyribonucleotides processively in the 3'- to 5'-direction. This is Polyribonucleotide nucleotidyltransferase from Escherichia coli O8 (strain IAI1).